Reading from the N-terminus, the 233-residue chain is Purine nucleoside phosphorylase DeoD-type (233 aa).

H4 provides a ligand contact to a purine D-ribonucleoside. Residues G20, R24, R43, and R87–T90 each bind phosphate. Residues E179–E181 and S203–D204 each bind a purine D-ribonucleoside. D204 (proton donor) is an active-site residue.

Belongs to the PNP/UDP phosphorylase family. Homohexamer; trimer of homodimers.

It catalyses the reaction a purine D-ribonucleoside + phosphate = a purine nucleobase + alpha-D-ribose 1-phosphate. It carries out the reaction a purine 2'-deoxy-D-ribonucleoside + phosphate = a purine nucleobase + 2-deoxy-alpha-D-ribose 1-phosphate. Catalyzes the reversible phosphorolytic breakdown of the N-glycosidic bond in the beta-(deoxy)ribonucleoside molecules, with the formation of the corresponding free purine bases and pentose-1-phosphate. The sequence is that of Purine nucleoside phosphorylase DeoD-type from Helicobacter acinonychis (strain Sheeba).